The sequence spans 467 residues: 3-isopropylmalate dehydratase large subunit (467 aa).

3 residues coordinate [4Fe-4S] cluster: C349, C409, and C412. The tract at residues 422 to 443 is disordered; sequence PGQRSASTSNRNFEGRQGRGGR.

This sequence belongs to the aconitase/IPM isomerase family. LeuC type 1 subfamily. As to quaternary structure, heterodimer of LeuC and LeuD. [4Fe-4S] cluster is required as a cofactor.

It carries out the reaction (2R,3S)-3-isopropylmalate = (2S)-2-isopropylmalate. Its pathway is amino-acid biosynthesis; L-leucine biosynthesis; L-leucine from 3-methyl-2-oxobutanoate: step 2/4. Functionally, catalyzes the isomerization between 2-isopropylmalate and 3-isopropylmalate, via the formation of 2-isopropylmaleate. This is 3-isopropylmalate dehydratase large subunit from Paramagnetospirillum magneticum (strain ATCC 700264 / AMB-1) (Magnetospirillum magneticum).